A 177-amino-acid chain; its full sequence is Dual-action ribosomal maturation protein DarP (177 aa).

A disordered region spans residues 1 to 26; sequence MKIVGDSEHFKQPYDSDEEYVSKTED.

It belongs to the DarP family.

Its subcellular location is the cytoplasm. Functionally, member of a network of 50S ribosomal subunit biogenesis factors which assembles along the 30S-50S interface, preventing incorrect 23S rRNA structures from forming. Promotes peptidyl transferase center (PTC) maturation. This Shewanella sp. (strain ANA-3) protein is Dual-action ribosomal maturation protein DarP.